A 453-amino-acid chain; its full sequence is Putative F-box/FBD/LRR-repeat protein At1g66290 (453 aa).

A disordered region spans residues 1–28 (MDEDGERRVRTKRSCSPESSDNGSGDEV). Over residues 14–23 (SCSPESSDNG) the composition is skewed to polar residues. Positions 28 to 81 (VDWISDLPEALIVLVLLNLPTKDVIKTSVLSTKWRNIWRYVPRLDLDNRHFTEF) constitute an F-box domain. 5 LRR repeats span residues 155–179 (SLKL…VLVL), 210–235 (LDNV…SSKS), 246–269 (APKL…NLSS), 305–329 (LSRV…RCEP), and 358–381 (CSNL…IISE). The region spanning 373–423 (RKRTSIISEPRCLLSSLEYVKIEFALDKGKMELVRYLLENSPILKKLTLSL) is the FBD domain.

This is Putative F-box/FBD/LRR-repeat protein At1g66290 from Arabidopsis thaliana (Mouse-ear cress).